The following is a 267-amino-acid chain: Ribosomal RNA small subunit methyltransferase A (267 aa).

S-adenosyl-L-methionine is bound by residues Asn-16, Leu-18, Gly-43, Glu-64, Asp-88, and Asn-109.

It belongs to the class I-like SAM-binding methyltransferase superfamily. rRNA adenine N(6)-methyltransferase family. RsmA subfamily.

It localises to the cytoplasm. It catalyses the reaction adenosine(1518)/adenosine(1519) in 16S rRNA + 4 S-adenosyl-L-methionine = N(6)-dimethyladenosine(1518)/N(6)-dimethyladenosine(1519) in 16S rRNA + 4 S-adenosyl-L-homocysteine + 4 H(+). Functionally, specifically dimethylates two adjacent adenosines (A1518 and A1519) in the loop of a conserved hairpin near the 3'-end of 16S rRNA in the 30S particle. May play a critical role in biogenesis of 30S subunits. The polypeptide is Ribosomal RNA small subunit methyltransferase A (Acidithiobacillus ferrooxidans (strain ATCC 23270 / DSM 14882 / CIP 104768 / NCIMB 8455) (Ferrobacillus ferrooxidans (strain ATCC 23270))).